The sequence spans 302 residues: UDP-3-O-acyl-N-acetylglucosamine deacetylase (302 aa).

Residues His78, His235, and Asp239 each contribute to the Zn(2+) site. His262 acts as the Proton donor in catalysis.

Belongs to the LpxC family. Zn(2+) is required as a cofactor.

The enzyme catalyses a UDP-3-O-[(3R)-3-hydroxyacyl]-N-acetyl-alpha-D-glucosamine + H2O = a UDP-3-O-[(3R)-3-hydroxyacyl]-alpha-D-glucosamine + acetate. The protein operates within glycolipid biosynthesis; lipid IV(A) biosynthesis; lipid IV(A) from (3R)-3-hydroxytetradecanoyl-[acyl-carrier-protein] and UDP-N-acetyl-alpha-D-glucosamine: step 2/6. Its function is as follows. Catalyzes the hydrolysis of UDP-3-O-myristoyl-N-acetylglucosamine to form UDP-3-O-myristoylglucosamine and acetate, the committed step in lipid A biosynthesis. This chain is UDP-3-O-acyl-N-acetylglucosamine deacetylase, found in Bdellovibrio bacteriovorus (strain ATCC 15356 / DSM 50701 / NCIMB 9529 / HD100).